A 281-amino-acid chain; its full sequence is Shikimate dehydrogenase (NADP(+)) (281 aa).

Shikimate-binding positions include 20-22 (SRS) and Thr67. Lys71 serves as the catalytic Proton acceptor. NADP(+) is bound at residue Asp83. 2 residues coordinate shikimate: Asn92 and Asp108. NADP(+)-binding positions include 133 to 137 (GAGGA), 157 to 162 (NRTEAR), and Met225. A shikimate-binding site is contributed by Tyr227. Residue Gly248 coordinates NADP(+).

It belongs to the shikimate dehydrogenase family. Homodimer.

It catalyses the reaction shikimate + NADP(+) = 3-dehydroshikimate + NADPH + H(+). It functions in the pathway metabolic intermediate biosynthesis; chorismate biosynthesis; chorismate from D-erythrose 4-phosphate and phosphoenolpyruvate: step 4/7. Functionally, involved in the biosynthesis of the chorismate, which leads to the biosynthesis of aromatic amino acids. Catalyzes the reversible NADPH linked reduction of 3-dehydroshikimate (DHSA) to yield shikimate (SA). The sequence is that of Shikimate dehydrogenase (NADP(+)) from Paracidovorax citrulli (strain AAC00-1) (Acidovorax citrulli).